Reading from the N-terminus, the 298-residue chain is Probable endonuclease 4 (298 aa).

Zn(2+)-binding residues include His-69, His-111, Glu-146, Asp-180, His-183, His-215, Asp-228, His-230, and Glu-260.

The protein belongs to the AP endonuclease 2 family. It depends on Zn(2+) as a cofactor.

The enzyme catalyses Endonucleolytic cleavage to 5'-phosphooligonucleotide end-products.. In terms of biological role, endonuclease IV plays a role in DNA repair. It cleaves phosphodiester bonds at apurinic or apyrimidinic (AP) sites, generating a 3'-hydroxyl group and a 5'-terminal sugar phosphate. The polypeptide is Probable endonuclease 4 (Bacillus mycoides (strain KBAB4) (Bacillus weihenstephanensis)).